The chain runs to 436 residues: Ribosome biogenesis protein WDR12 homolog (436 aa).

Residues V13–K97 form a ubiquitin-like (UBL) domain region. WD repeat units lie at residues P109 to L147, G149 to K193, G203 to D242, G273 to N311, V313 to P353, S359 to S399, and S402 to V436. The disordered stretch occupies residues D240–L262.

The protein belongs to the WD repeat WDR12/YTM1 family.

Its subcellular location is the nucleus. It is found in the nucleolus. It localises to the nucleoplasm. Required for maturation of ribosomal RNAs and formation of the large ribosomal subunit. The sequence is that of Ribosome biogenesis protein WDR12 homolog from Oryza sativa subsp. japonica (Rice).